The following is a 139-amino-acid chain: uncharacterized protein (139 aa).

Positions 5–114 (IFCKIINKEL…IPRFKNDGFG (110 aa)) constitute an HIT domain. Positions 99–103 (HTHFH) match the Histidine triad motif motif.

This is an uncharacterized protein from Borreliella burgdorferi (strain ATCC 35210 / DSM 4680 / CIP 102532 / B31) (Borrelia burgdorferi).